The primary structure comprises 672 residues: COBRA-like protein 10 (672 aa).

The N-terminal stretch at 1-35 (MRAIDVKTGMKIPWDVRYSLSLFIFLSSILFLSNG) is a signal peptide. N-linked (GlcNAc...) asparagine glycans are attached at residues asparagine 79, asparagine 135, asparagine 264, asparagine 328, asparagine 339, asparagine 368, asparagine 422, asparagine 442, asparagine 483, asparagine 562, asparagine 570, and asparagine 589. Residues 502 to 607 (KLPCPDNCGV…PVPGKQQSVI (106 aa)) enclose the CBM2 domain. Serine 646 carries GPI-anchor amidated serine lipidation. A propeptide spans 647 to 672 (SGHRRGISVSMSFVFATIAAFALMMD) (removed in mature form). The Required for processing by the PIG complex, a critical step for apical plasma membrane localization in pollen tubes signature appears at 664–672 (IAAFALMMD).

This sequence belongs to the COBRA family. The GPI-anchor attachment at Ser-646 requires APTG1. As to expression, expressed in roots, stems, leaves, flowers and siliques. Specific expression in the pollen tube.

It localises to the cell membrane. It is found in the cytoplasm. The protein localises to the vesicle. Functionally, involved in the deposition of apical pectin cap and cellulose microfibrils in pollen tubes. Not essential for pollen development, hydration or germination, but required for pollen tubes growth in the female transmitting tract of pistil and toward micropyles, via the perception of ovule guidance cues. The sequence is that of COBRA-like protein 10 from Arabidopsis thaliana (Mouse-ear cress).